Here is a 179-residue protein sequence, read N- to C-terminus: ATP synthase subunit delta (179 aa).

The protein belongs to the ATPase delta chain family. As to quaternary structure, F-type ATPases have 2 components, F(1) - the catalytic core - and F(0) - the membrane proton channel. F(1) has five subunits: alpha(3), beta(3), gamma(1), delta(1), epsilon(1). F(0) has three main subunits: a(1), b(2) and c(10-14). The alpha and beta chains form an alternating ring which encloses part of the gamma chain. F(1) is attached to F(0) by a central stalk formed by the gamma and epsilon chains, while a peripheral stalk is formed by the delta and b chains.

The protein resides in the cell membrane. F(1)F(0) ATP synthase produces ATP from ADP in the presence of a proton or sodium gradient. F-type ATPases consist of two structural domains, F(1) containing the extramembraneous catalytic core and F(0) containing the membrane proton channel, linked together by a central stalk and a peripheral stalk. During catalysis, ATP synthesis in the catalytic domain of F(1) is coupled via a rotary mechanism of the central stalk subunits to proton translocation. In terms of biological role, this protein is part of the stalk that links CF(0) to CF(1). It either transmits conformational changes from CF(0) to CF(1) or is implicated in proton conduction. The sequence is that of ATP synthase subunit delta from Clostridium botulinum (strain ATCC 19397 / Type A).